A 171-amino-acid chain; its full sequence is Crossover junction endodeoxyribonuclease RuvC (171 aa).

Catalysis depends on residues D11, E71, and D143. Residues D11, E71, and D143 each contribute to the Mg(2+) site.

It belongs to the RuvC family. In terms of assembly, homodimer which binds Holliday junction (HJ) DNA. The HJ becomes 2-fold symmetrical on binding to RuvC with unstacked arms; it has a different conformation from HJ DNA in complex with RuvA. In the full resolvosome a probable DNA-RuvA(4)-RuvB(12)-RuvC(2) complex forms which resolves the HJ. Requires Mg(2+) as cofactor.

It is found in the cytoplasm. The enzyme catalyses Endonucleolytic cleavage at a junction such as a reciprocal single-stranded crossover between two homologous DNA duplexes (Holliday junction).. The RuvA-RuvB-RuvC complex processes Holliday junction (HJ) DNA during genetic recombination and DNA repair. Endonuclease that resolves HJ intermediates. Cleaves cruciform DNA by making single-stranded nicks across the HJ at symmetrical positions within the homologous arms, yielding a 5'-phosphate and a 3'-hydroxyl group; requires a central core of homology in the junction. The consensus cleavage sequence is 5'-(A/T)TT(C/G)-3'. Cleavage occurs on the 3'-side of the TT dinucleotide at the point of strand exchange. HJ branch migration catalyzed by RuvA-RuvB allows RuvC to scan DNA until it finds its consensus sequence, where it cleaves and resolves the cruciform DNA. The polypeptide is Crossover junction endodeoxyribonuclease RuvC (Chelativorans sp. (strain BNC1)).